A 326-amino-acid polypeptide reads, in one-letter code: Malate dehydrogenase (326 aa).

12–18 is an NAD(+) binding site; the sequence is GGTGQIA. Residues arginine 93 and arginine 99 each coordinate substrate. NAD(+)-binding positions include asparagine 106, glutamine 113, and 130 to 132; that span reads VGN. Residues asparagine 132 and arginine 163 each contribute to the substrate site. Catalysis depends on histidine 188, which acts as the Proton acceptor.

Belongs to the LDH/MDH superfamily. MDH type 2 family.

It catalyses the reaction (S)-malate + NAD(+) = oxaloacetate + NADH + H(+). Functionally, catalyzes the reversible oxidation of malate to oxaloacetate. This Chlamydia trachomatis serovar D (strain ATCC VR-885 / DSM 19411 / UW-3/Cx) protein is Malate dehydrogenase.